Reading from the N-terminus, the 367-residue chain is Glutamate 5-kinase (367 aa).

Position 10 (lysine 10) interacts with ATP. Substrate is bound by residues serine 50, aspartate 137, and asparagine 149. ATP is bound by residues 169–170 (TD) and 211–217 (TGGMSTK). The PUA domain maps to 275 to 353 (AGEITVDEGA…QEIDAILGYE (79 aa)).

Belongs to the glutamate 5-kinase family.

It is found in the cytoplasm. It catalyses the reaction L-glutamate + ATP = L-glutamyl 5-phosphate + ADP. It functions in the pathway amino-acid biosynthesis; L-proline biosynthesis; L-glutamate 5-semialdehyde from L-glutamate: step 1/2. In terms of biological role, catalyzes the transfer of a phosphate group to glutamate to form L-glutamate 5-phosphate. The sequence is that of Glutamate 5-kinase from Shigella flexneri.